A 672-amino-acid chain; its full sequence is Beta-galactosidase bgaB (672 aa).

Arginine 109 lines the substrate pocket. A Zn(2+)-binding site is contributed by cysteine 113. Asparagine 147 lines the substrate pocket. Glutamate 148 acts as the Proton donor in catalysis. Zn(2+) is bound by residues cysteine 156, cysteine 158, and cysteine 161. The active-site Nucleophile is the glutamate 303. Substrate contacts are provided by residues tryptophan 311 and 351-354; that span reads EKFH.

It belongs to the glycosyl hydrolase 42 family.

It carries out the reaction Hydrolysis of terminal non-reducing beta-D-galactose residues in beta-D-galactosides.. By divalent metal ions. Fe(2+), Zn(2+), Cu(2+), Pb(2+) and Sn(2+) inhibit 52, 76.6, 85.3, 100 and 100% of the enzyme activity, respectively. Other metal cations and EDTA do not inhibit this enzyme. Thiol reagents 2-mercaptoethanol and dithiothreitol have no effect on the activity. Sulfhydryl group-blocking reagents p-chloromercuribenzoic acid and iodoacetic acid inhibit 86.2 and 74% of the enzyme activity, respectively. Its function is as follows. Hydrolyzes 6-bromo-2-naphthyl-beta-D-galactopyranoside and o-nitrophenyl-beta-D-galactopyranoside (ONPG). Possesses a high level of transgalactosylation activity. Hydrolyzes lactose in milk. This is Beta-galactosidase bgaB (bgaB) from Geobacillus kaustophilus.